The primary structure comprises 250 residues: MGAPGLETRAGGPNGKSYLLLASVGAAVLGTLLLSVPITVLTVLALMPQEQGGQVADPSGPGGQLLQQLGFHKLPVESRSDLSPIPPAAHLIGIAKSSHGLRWVSGYEEAFLKSGTQFLGDEGLLALPQDGIYFLYCHIGYRGRAPSGGEQFRSQAGDPGVPVTLSSQLFRARGASGSGEPELLLQGFETVTPPVQHARGVGQGPLWYATVGFGGLVQLRGGEKIYVNVSHLELVDFRRGKTFFGAVMVG.

Over Met1 to Ala26 the chain is Cytoplasmic. The chain crosses the membrane as a helical; Signal-anchor for type II membrane protein span at residues Ala27–Met47. The Extracellular segment spans residues Pro48 to Gly250. Residues Pro87–Val249 enclose the THD domain. N-linked (GlcNAc...) asparagine glycosylation is present at Asn228.

The protein belongs to the tumor necrosis factor family. As to quaternary structure, heterotrimer of either two LTB and one LTA subunits or (less prevalent) two LTA and one LTB subunits.

Its subcellular location is the membrane. In terms of biological role, cytokine that binds to LTBR/TNFRSF3. May play a specific role in immune response regulation. Provides the membrane anchor for the attachment of the heterotrimeric complex to the cell surface. The protein is Lymphotoxin-beta (LTB) of Notamacropus eugenii (Tammar wallaby).